Reading from the N-terminus, the 150-residue chain is Large ribosomal subunit protein uL13 (150 aa).

The protein belongs to the universal ribosomal protein uL13 family. As to quaternary structure, part of the 50S ribosomal subunit.

Functionally, this protein is one of the early assembly proteins of the 50S ribosomal subunit, although it is not seen to bind rRNA by itself. It is important during the early stages of 50S assembly. This is Large ribosomal subunit protein uL13 from Mesoplasma florum (strain ATCC 33453 / NBRC 100688 / NCTC 11704 / L1) (Acholeplasma florum).